The primary structure comprises 309 residues: tRNA dimethylallyltransferase (309 aa).

Gly9–Thr16 lines the ATP pocket. Thr11 to Thr16 lines the substrate pocket. An interaction with substrate tRNA region spans residues Asp34 to Gln37.

The protein belongs to the IPP transferase family. Monomer. Mg(2+) is required as a cofactor.

The enzyme catalyses adenosine(37) in tRNA + dimethylallyl diphosphate = N(6)-dimethylallyladenosine(37) in tRNA + diphosphate. In terms of biological role, catalyzes the transfer of a dimethylallyl group onto the adenine at position 37 in tRNAs that read codons beginning with uridine, leading to the formation of N6-(dimethylallyl)adenosine (i(6)A). The protein is tRNA dimethylallyltransferase of Clostridium kluyveri (strain NBRC 12016).